We begin with the raw amino-acid sequence, 243 residues long: Carboxy-S-adenosyl-L-methionine synthase (243 aa).

Residues Tyr40, 65 to 67 (GCS), 90 to 91 (DN), 118 to 119 (DI), Asn133, and Arg200 each bind S-adenosyl-L-methionine.

It belongs to the class I-like SAM-binding methyltransferase superfamily. Cx-SAM synthase family. As to quaternary structure, homodimer.

It carries out the reaction prephenate + S-adenosyl-L-methionine = carboxy-S-adenosyl-L-methionine + 3-phenylpyruvate + H2O. Functionally, catalyzes the conversion of S-adenosyl-L-methionine (SAM) to carboxy-S-adenosyl-L-methionine (Cx-SAM). This is Carboxy-S-adenosyl-L-methionine synthase from Shewanella baltica (strain OS223).